The sequence spans 1499 residues: B-cell CLL/lymphoma 9-like protein (1499 aa).

Disordered regions lie at residues methionine 1–glutamine 238 and valine 271–glutamine 500. Over residues glycine 20 to proline 37 the composition is skewed to pro residues. Residues serine 21 and serine 25 each carry the phosphoserine modification. N6-acetyllysine is present on lysine 36. Polar residues-rich tracts occupy residues threonine 45–valine 70 and asparagine 85–asparagine 96. Position 88 is a phosphoserine (serine 88). N6-acetyllysine occurs at positions 108 and 110. Basic and acidic residues-rich tracts occupy residues aspartate 114–glutamate 126 and serine 134–glutamine 153. Serine 116 and serine 118 each carry phosphoserine. Lysine 137 carries the post-translational modification N6-acetyllysine. A compositionally biased stretch (polar residues) spans proline 193–serine 205. Gly residues predominate over residues proline 222–proline 232. Composition is skewed to pro residues over residues lysine 281–leucine 291 and serine 301–glycine 325. A necessary for interaction with CTNNB1 region spans residues proline 304–arginine 533. 2 stretches are compositionally biased toward low complexity: residues threonine 351–asparagine 363 and aspartate 370–glycine 387. A compositionally biased stretch (basic and acidic residues) spans leucine 399 to leucine 421. Residue serine 424 is modified to Phosphoserine. Over residues alanine 445–proline 458 the composition is skewed to pro residues. Threonine 514 carries the post-translational modification Phosphothreonine. Arginine 680 bears the Asymmetric dimethylarginine mark. 14 positions are modified to phosphoserine: serine 750, serine 813, serine 915, serine 926, serine 938, serine 942, serine 947, serine 975, serine 987, serine 991, serine 997, serine 1004, serine 1010, and serine 1017. Disordered stretches follow at residues serine 888–leucine 1084 and glutamate 1116–serine 1201. Residues proline 935–glutamine 960 are compositionally biased toward polar residues. Over residues valine 978–lysine 996 the composition is skewed to polar residues. Polar residues-rich tracts occupy residues glycine 1019–glutamine 1041 and leucine 1069–leucine 1084. 2 stretches are compositionally biased toward pro residues: residues proline 1122–glycine 1132 and histidine 1168–threonine 1179. A Glycyl lysine isopeptide (Lys-Gly) (interchain with G-Cter in SUMO2) cross-link involves residue lysine 1344.

Belongs to the BCL9 family. Found in a complex with CDC73; CTNNB1 and PYGO1. Interacts with CTNNB1. As to expression, expressed in breast, ductal and invasive ductal carcinomas of the breast, sporadic colorectal adenomas and carcinomas (at protein level). Expressed in fetal brain. Expressed in lung, amygdala, eye, prostate, pancreatic and prostate cancers, head and neck tumors and embryonal tumor.

The protein localises to the nucleus. Its function is as follows. Transcriptional regulator that acts as an activator. Promotes beta-catenin transcriptional activity. Plays a role in tumorigenesis. Enhances the neoplastic transforming activity of CTNNB1. This is B-cell CLL/lymphoma 9-like protein (BCL9L) from Homo sapiens (Human).